We begin with the raw amino-acid sequence, 178 residues long: Large ribosomal subunit protein uL6 (178 aa).

This sequence belongs to the universal ribosomal protein uL6 family. In terms of assembly, part of the 50S ribosomal subunit.

Functionally, this protein binds to the 23S rRNA, and is important in its secondary structure. It is located near the subunit interface in the base of the L7/L12 stalk, and near the tRNA binding site of the peptidyltransferase center. This Lactococcus lactis subsp. lactis (strain IL1403) (Streptococcus lactis) protein is Large ribosomal subunit protein uL6.